The chain runs to 975 residues: Translation initiation factor IF-2 (975 aa).

Positions 48-63 (DHLRKSHGATDGDKRK) are enriched in basic and acidic residues. Disordered stretches follow at residues 48 to 84 (DHLR…GKAR) and 96 to 388 (FVKR…QAPT). A compositionally biased stretch (low complexity) spans 104–115 (ETGADQAQAQTD). Residues 120 to 177 (AELKRREEEARREAELLEKQAQELRERQERLEREEAERRAREEAAEAERRRAEEEAAA) are compositionally biased toward basic and acidic residues. Residues 178 to 211 (KRAAAAQAEAAQQAAAAREQAQRAQSEPAEQSAQ) show a composition bias toward low complexity. The segment covering 212-263 (DEARAAAERAAQREAAKKAEDAAREAADKARAEQEEIRKRREAAEAEARAIR) has biased composition (basic and acidic residues). The span at 302-330 (KPAGEAAAARPAAKKPASGAPAPAAAPAG) shows a compositional bias: low complexity. Residues 359 to 372 (SSGGVDRGWRGGPK) are compositionally biased toward gly residues. The tr-type G domain occupies 475–644 (PRPPVVTVMG…LLQAEVLELK (170 aa)). The interval 484–491 (GHVDHGKT) is G1. 484–491 (GHVDHGKT) provides a ligand contact to GTP. The tract at residues 509 to 513 (GITQH) is G2. The segment at 530–533 (DTPG) is G3. GTP is bound by residues 530–534 (DTPGH) and 584–587 (NKID). The G4 stretch occupies residues 584–587 (NKID). Positions 620 to 622 (SAK) are G5.

Belongs to the TRAFAC class translation factor GTPase superfamily. Classic translation factor GTPase family. IF-2 subfamily.

It localises to the cytoplasm. One of the essential components for the initiation of protein synthesis. Protects formylmethionyl-tRNA from spontaneous hydrolysis and promotes its binding to the 30S ribosomal subunits. Also involved in the hydrolysis of GTP during the formation of the 70S ribosomal complex. The chain is Translation initiation factor IF-2 from Burkholderia pseudomallei (strain 1710b).